We begin with the raw amino-acid sequence, 388 residues long: tRNA (guanine(26)-N(2))-dimethyltransferase (388 aa).

The region spanning 4–383 (KTIVEGTTKV…APITEIKEII (380 aa)) is the Trm1 methyltransferase domain. 4 residues coordinate S-adenosyl-L-methionine: arginine 41, arginine 78, aspartate 94, and alanine 123. 4 residues coordinate Zn(2+): cysteine 251, cysteine 254, cysteine 271, and cysteine 274.

It belongs to the class I-like SAM-binding methyltransferase superfamily. Trm1 family.

It catalyses the reaction guanosine(26) in tRNA + 2 S-adenosyl-L-methionine = N(2)-dimethylguanosine(26) in tRNA + 2 S-adenosyl-L-homocysteine + 2 H(+). Its function is as follows. Dimethylates a single guanine residue at position 26 of a number of tRNAs using S-adenosyl-L-methionine as donor of the methyl groups. The chain is tRNA (guanine(26)-N(2))-dimethyltransferase from Methanosarcina barkeri (strain Fusaro / DSM 804).